A 310-amino-acid chain; its full sequence is Glutamyl-Q tRNA(Asp) synthetase (310 aa).

Residues 24-28 and Glu-60 each bind L-glutamate; that span reads RFAPS. The short motif at 27–37 is the 'HIGH' region element; it reads PSPSGPLHFGS. The Zn(2+) site is built by Cys-116, Cys-118, Tyr-130, and Cys-134. L-glutamate-binding residues include Tyr-187 and Arg-205. The short motif at 243–247 is the 'KMSKS' region element; the sequence is KLSKQ. ATP is bound at residue Lys-246.

This sequence belongs to the class-I aminoacyl-tRNA synthetase family. GluQ subfamily. It depends on Zn(2+) as a cofactor.

Its function is as follows. Catalyzes the tRNA-independent activation of glutamate in presence of ATP and the subsequent transfer of glutamate onto a tRNA(Asp). Glutamate is transferred on the 2-amino-5-(4,5-dihydroxy-2-cyclopenten-1-yl) moiety of the queuosine in the wobble position of the QUC anticodon. In Photobacterium profundum (strain SS9), this protein is Glutamyl-Q tRNA(Asp) synthetase.